Reading from the N-terminus, the 377-residue chain is tRNA(Met) cytidine acetate ligase (377 aa).

ATP-binding positions include 7–20 (VVEY…HRYH), Gly-101, Asn-151, and Arg-176.

Belongs to the TmcAL family.

Its subcellular location is the cytoplasm. The catalysed reaction is cytidine(34) in elongator tRNA(Met) + acetate + ATP = N(4)-acetylcytidine(34) in elongator tRNA(Met) + AMP + diphosphate. In terms of biological role, catalyzes the formation of N(4)-acetylcytidine (ac(4)C) at the wobble position of elongator tRNA(Met), using acetate and ATP as substrates. First activates an acetate ion to form acetyladenylate (Ac-AMP) and then transfers the acetyl group to tRNA to form ac(4)C34. The chain is tRNA(Met) cytidine acetate ligase from Limosilactobacillus reuteri (strain DSM 20016) (Lactobacillus reuteri).